The sequence spans 189 residues: Ras-like protein rasC (189 aa).

A GTP-binding site is contributed by 11–18; that stretch reads GDGGVGKS. The Effector region signature appears at 33 to 41; sequence YDPTIENSY. GTP is bound by residues 58–62 and 117–120; these read DTAGQ and NKAD. Cys-186 is modified (cysteine methyl ester). Residue Cys-186 is the site of S-geranylgeranyl cysteine attachment. Positions 187-189 are cleaved as a propeptide — removed in mature form; that stretch reads IIL.

The protein belongs to the small GTPase superfamily. Ras family.

The protein localises to the cell membrane. It catalyses the reaction GTP + H2O = GDP + phosphate + H(+). With respect to regulation, alternates between an inactive form bound to GDP and an active form bound to GTP. Activated by a guanine nucleotide-exchange factor (GEF) and inactivated by a GTPase-activating protein (GAP). Ras proteins bind GDP/GTP and possess intrinsic GTPase activity. This is Ras-like protein rasC (rasC) from Dictyostelium discoideum (Social amoeba).